Consider the following 486-residue polypeptide: F-box protein At1g80960 (486 aa).

The F-box domain maps to 49 to 97; that stretch reads VDWISKLPDDVLLIILSRLSTEEAIRTSVVSKRWEHVWNQMSHLVFDMR.

The chain is F-box protein At1g80960 from Arabidopsis thaliana (Mouse-ear cress).